The sequence spans 585 residues: A-type ATP synthase subunit A (585 aa).

Position 235-242 (235-242 (GPFGSGKT)) interacts with ATP.

It belongs to the ATPase alpha/beta chains family. In terms of assembly, has multiple subunits with at least A(3), B(3), C, D, E, F, H, I and proteolipid K(x).

It is found in the cell membrane. The enzyme catalyses ATP + H2O + 4 H(+)(in) = ADP + phosphate + 5 H(+)(out). Functionally, component of the A-type ATP synthase that produces ATP from ADP in the presence of a proton gradient across the membrane. The A chain is the catalytic subunit. The protein is A-type ATP synthase subunit A of Halobacterium salinarum (strain ATCC 29341 / DSM 671 / R1).